The chain runs to 2472 residues: Nuclear receptor corepressor 2 (2472 aa).

Disordered regions lie at residues 1–20 (MSGS…PRYP), 47–168 (RDYT…SRLS), and 190–220 (ISKL…PPIE). Arginine 18 carries the asymmetric dimethylarginine modification. Positions 51 to 60 (SHLSPGSIIQ) are enriched in polar residues. 2 positions are modified to phosphoserine: serine 54 and serine 67. 2 stretches are compositionally biased toward basic and acidic residues: residues 78 to 88 (RSQELHLRPES) and 96 to 112 (GKPD…RLEL). Residues serine 149 and serine 152 each carry the phosphoserine modification. Residues 165–207 (SRLSKEELIQNMDRVDREITMVEQQISKLKKKQQQLEEEAAKP) adopt a coiled-coil conformation. Positions 203–212 (EAAKPPEPEK) are enriched in basic and acidic residues. Position 215 is a phosphoserine (serine 215). Residues 254–312 (LPLYNQPSDTRQYHENIKINQAMRKKLILYFKRRNHARKQWEQRFCQRYDQLMEAWEKK) form an interaction with SIN3A/B region. A deacetylase activation domain (DAD) region spans residues 389-480 (MRQLAVIPPM…YLTKKNENYK (92 aa)). An SANT 1 domain is found at 427 to 478 (QVTNMWSEQERDTFREKFMQHPKNFGLIASFLERKTVAECVLYYYLTKKNEN). Residues lysine 449, tyrosine 470, and tyrosine 471 each coordinate 1D-myo-inositol 1,4,5,6-tetrakisphosphate. 3 disordered regions span residues 487-618 (YRRR…EMET), 665-1107 (HKLK…RPPI), and 1173-1197 (SATS…YRGS). Residues 492–560 (KSQQQQQQQQ…GEDNDEKEAV (69 aa)) adopt a coiled-coil conformation. Serine 493 carries the post-translational modification Phosphoserine. The span at 494–507 (QQQQQQQQQQQQQQ) shows a compositional bias: low complexity. Over residues 512-548 (SQEEKEEKEKEKEADKEEEKQDAENEKEELSKEKTDD) the composition is skewed to basic and acidic residues. Phosphothreonine is present on threonine 549. Serine 550 is subject to Phosphoserine. The segment covering 592-609 (ATPQQSSELASMEMNESS) has biased composition (polar residues). An SANT 2 domain is found at 606–657 (NESSRWTEEEMETAKKGLLEHGRNWSAIARMVGSKTVSQCKNFYFNYKKRQN). Residues 658 to 682 (LDEILQQHKLKMEKERNARRKKKKT) are a coiled coil. The span at 709-718 (NEEELAEEAE) shows a compositional bias: acidic residues. The segment covering 739-750 (VNNSSDTESVPS) has biased composition (polar residues). A phosphoserine mark is found at serine 747 and serine 750. Composition is skewed to pro residues over residues 773–782 (TQPPVPPPEE) and 789–811 (EPSP…PAAP). 2 stretches are compositionally biased toward basic and acidic residues: residues 831-850 (EDAK…KPEE) and 859-868 (ESVKSDHKEE). Lysine 878 carries the post-translational modification N6-acetyllysine. Low complexity predominate over residues 905-919 (GSSSGATQDSDSSAT). Serine 938 is modified (phosphoserine). Threonine 945 carries the phosphothreonine modification. Serine 955 is modified (phosphoserine). Lysine 958 carries the post-translational modification N6-acetyllysine. Positions 978-988 (KVHEPPREDTV) are enriched in basic and acidic residues. The segment covering 989 to 1000 (PPKPVPPVPPPT) has biased composition (pro residues). Residues 1090–1101 (LPLGLHDSARPV) show a composition bias toward low complexity. N6-acetyllysine occurs at positions 1181 and 1209. Serine 1220 bears the Phosphoserine mark. Disordered stretches follow at residues 1254-1277 (SVSQ…AAPK), 1345-1378 (LKRE…LKLK), and 1410-1443 (PLAP…KHDV). At threonine 1350 the chain carries Phosphothreonine. A compositionally biased stretch (basic and acidic residues) spans 1359 to 1368 (DLTETYKPRP). A phosphoserine mark is found at serine 1449, serine 1509, and serine 1565. The disordered stretch occupies residues 1479–1578 (KSRSGTSSGA…TVPEHHPHPI (100 aa)). Position 1624 is an asymmetric dimethylarginine (arginine 1624). Residues 1734 to 1826 (TAPPPFSSRH…PISPRTQDAL (93 aa)) are disordered. The segment covering 1740 to 1753 (SSRHSSSPLSPGGP) has biased composition (low complexity). Phosphoserine occurs at positions 1746 and 1749. The segment covering 1765-1778 (SERERERERERDKS) has biased composition (basic and acidic residues). Residues 1807–1826 (RPASHTHQHSPISPRTQDAL) show a composition bias toward polar residues. Serine 1819 carries the phosphoserine modification. At arginine 1854 the chain carries Omega-N-methylarginine. Disordered regions lie at residues 1857-1878 (RSTS…THCP), 1898-1986 (KETS…KPFS), and 2001-2078 (AGYS…LQTA). Residues 1899-1913 (ETSRVARPERPRVDA) show a composition bias toward basic and acidic residues. Residue lysine 1920 is modified to N6-acetyllysine. The segment covering 1925 to 1938 (EPASSPSKSSEPRS) has biased composition (low complexity). Serine 1963 carries the phosphoserine modification. Lysine 1983 is modified (N6-acetyllysine). Phosphoserine is present on residues serine 2004, serine 2012, serine 2015, serine 2016, and serine 2018. Phosphothreonine is present on threonine 2020. Over residues 2020 to 2043 (THDKGLSKPLEELEKSHLEGELRH) the composition is skewed to basic and acidic residues. At serine 2035 the chain carries Phosphoserine. Residues 2064–2075 (LPESQPSSSPLL) show a composition bias toward low complexity. The segment at 2086–2090 (RVVTL) is required for interaction with RARA in the absence of its ligand. The CORNR box of ID1 signature appears at 2094 to 2098 (ISEVI). The interval 2132 to 2226 (RRPPSDLYLP…GNTSQPPAFF (95 aa)) is disordered. Residues serine 2161, serine 2181, and serine 2215 each carry the phosphoserine modification. A CORNR box of ID2 motif is present at residues 2296 to 2300 (LEAII). Residues 2343–2459 (GRSDHALTSP…HHAWDEEPKP (117 aa)) are disordered. At serine 2371 the chain carries Phosphoserine. A compositionally biased stretch (low complexity) spans 2439–2450 (LAAGSGPLAGPH).

It belongs to the N-CoR nuclear receptor corepressors family. In terms of assembly, forms a large corepressor complex that contains SIN3A/B and histone deacetylases HDAC1 and HDAC2. This complex associates with the thyroid (TR) and the retinoid acid receptors (RAR) in the absence of ligand, and may stabilize their interaction with TFIIB. Interacts directly with RARA in the absence of ligand; the interaction represses RARA activity. Interacts (isoform SMRT) with HDAC10. Interacts with MINT. Component of the N-Cor repressor complex, at least composed of NCOR1, NCOR2, HDAC3, TBL1X, TBL1R, CORO2A and GPS2. Interacts with CBFA2T3 and ATXN1L. Interacts with RARB; the interaction is weak and does not repress RARB transactivational activity. Interacts (via 1D-myo-inositol 1,4,5,6-tetrakisphosphate) with HDAC3; promoting the histone deacetylase activity of HDAC3. Interacts with HDAC7 and C1D. Interacts with NR4A2; this interaction increases in the absence of PITX3. Interacts with BCL6 (via the BTB domain), required for BCL6 transcriptional repressor activity on a subset of target genes. Forms ternary complexes with BCOR and BCL6 on target gene promoters but, on enhancer elements, interacts with BCL6 and HDAC3 to repress proximal gene expression. May interact with DEAF1. Interacts with RXRA. Interacts with MECP2. Interacts with ZBTB7A. Interacts with AR. Interacts with TBL1Y. Interacts with SANBR (via the BTB domain). In terms of tissue distribution, ubiquitous. Also widely expressed in early embryos.

It is found in the nucleus. Transcriptional corepressor that mediates the transcriptional repression activity of some nuclear receptors by promoting chromatin condensation, thus preventing access of the basal transcription. Acts by recruiting chromatin modifiers, such as histone deacetylases HDAC1, HDAC2 and HDAC3. Required to activate the histone deacetylase activity of HDAC3. Involved in the regulation BCL6-dependent of the germinal center (GC) reactions, mainly through the control of the GC B-cells proliferation and survival. Recruited by ZBTB7A to the androgen response elements/ARE on target genes, negatively regulates androgen receptor signaling and androgen-induced cell proliferation. In Mus musculus (Mouse), this protein is Nuclear receptor corepressor 2 (Ncor2).